A 135-amino-acid polypeptide reads, in one-letter code: Helix-loop-helix protein 2 (135 aa).

A disordered region spans residues 1–81; the sequence is MMLSPDQAAD…RRATAKYRSA (81 aa). Positions 10–21 are enriched in basic and acidic residues; the sequence is DSDHPSSTHSDP. Positions 68–81 are enriched in basic residues; that stretch reads KRRRRRATAKYRSA. One can recognise a bHLH domain in the interval 77–129; it reads KYRSAHATRERIRVEAFNLAFAELRKLLPTLPPDKKLSKIEILRLAICYISYL.

Homodimer. Interacts and may form heterodimers with STAT3. In terms of tissue distribution, expressed in developing neurons. Transiently expressed in the cerebellum during postnatal development, exclusively in the premigratory zone of the external granule layer where postmitotic neurons undergo initial stages of neuronal differentiation. Expression is not detected in mature neurons. Expressed in the anterior lobe of the adult pituitary.

It is found in the nucleus. Its function is as follows. Transcription factor which binds the E box motif 5'-CA[TC][AG]TG-3'. Involved in regulating energy expenditure, body mass, voluntary physical activity, mating behavior and reproductive longevity, acting through the hypothalamic-pituitary-gonadal axis. Acts as a transcriptional activator of target genes, including Ndn, Pcsk1, Mc4r. Is also a transcriptional activator of KISS1. May act centrally to regulate function of both white and brown adipose tissue. Together with NHLH1, required to maintain migration and survival of cells in the anterior extramural migration stream (aes), which forms the precerebellar nuclei. Also, in concert with Nhlh1, may determine fate of gonadotropin releasing hormone-1 (GnRH-1) neurons. This is Helix-loop-helix protein 2 (Nhlh2) from Mus musculus (Mouse).